Here is a 303-residue protein sequence, read N- to C-terminus: Ribosomal RNA small subunit methyltransferase H (303 aa).

S-adenosyl-L-methionine is bound by residues 36–38 (CGH), aspartate 55, phenylalanine 81, aspartate 101, and glutamine 108.

Belongs to the methyltransferase superfamily. RsmH family.

It is found in the cytoplasm. It carries out the reaction cytidine(1402) in 16S rRNA + S-adenosyl-L-methionine = N(4)-methylcytidine(1402) in 16S rRNA + S-adenosyl-L-homocysteine + H(+). Specifically methylates the N4 position of cytidine in position 1402 (C1402) of 16S rRNA. The chain is Ribosomal RNA small subunit methyltransferase H from Aster yellows witches'-broom phytoplasma (strain AYWB).